Reading from the N-terminus, the 675-residue chain is Pesticidal crystal protein Cry25Aa (675 aa).

The protein belongs to the delta endotoxin family.

Functionally, promotes colloidosmotic lysis by binding to the midgut epithelial cells of insects. In Bacillus thuringiensis subsp. jegathesan, this protein is Pesticidal crystal protein Cry25Aa (cry25Aa).